Consider the following 180-residue polypeptide: Pro-glucagon (180 aa).

A signal peptide spans 1-20; that stretch reads MKTIYFVAGLLIMLVQGSWQ. The disordered stretch occupies residues 25-58; the sequence is DTEENPRSFPASQTEAHEDPDEMNEDKRHSQGTF. Phosphoserine is present on serine 54. A propeptide spanning residues 84–89 is cleaved from the precursor; the sequence is NRNNIA. A phosphoserine mark is found at serine 105 and serine 108. Arginine 127 carries the post-translational modification Arginine amide. The propeptide occupies 131–145; sequence DFPEEVAIAEELGRR. 2 positions are modified to phosphoserine: serine 150 and serine 152.

Belongs to the glucagon family. In terms of processing, proglucagon is post-translationally processed in a tissue-specific manner in pancreatic A cells and intestinal L cells. In pancreatic A cells, the major bioactive hormone is glucagon cleaved by PCSK2/PC2. In the intestinal L cells PCSK1/PC1 liberates GLP-1, GLP-2, glicentin and oxyntomodulin. GLP-1 is further N-terminally truncated by post-translational processing in the intestinal L cells resulting in GLP-1(7-37) GLP-1-(7-36)amide. The C-terminal amidation is neither important for the metabolism of GLP-1 nor for its effects on the endocrine pancreas. Secreted in the A cells of the islets of Langerhans. In terms of tissue distribution, secreted in the A cells of the islets of Langerhans. Secreted from enteroendocrine L cells throughout the gastrointestinal tract. Also secreted in selected neurons in the brain. As to expression, secreted from enteroendocrine cells throughout the gastrointestinal tract. Also secreted in selected neurons in the brain. Secreted from enteroendocrine cells throughout the gastrointestinal tract.

The protein resides in the secreted. Its function is as follows. Plays a key role in glucose metabolism and homeostasis. Regulates blood glucose by increasing gluconeogenesis and decreasing glycolysis. A counterregulatory hormone of insulin, raises plasma glucose levels in response to insulin-induced hypoglycemia. Plays an important role in initiating and maintaining hyperglycemic conditions in diabetes. In terms of biological role, potent stimulator of glucose-dependent insulin release. Also stimulates insulin release in response to IL6. Plays important roles on gastric motility and the suppression of plasma glucagon levels. May be involved in the suppression of satiety and stimulation of glucose disposal in peripheral tissues, independent of the actions of insulin. Has growth-promoting activities on intestinal epithelium. May also regulate the hypothalamic pituitary axis (HPA) via effects on LH, TSH, CRH, oxytocin, and vasopressin secretion. Increases islet mass through stimulation of islet neogenesis and pancreatic beta cell proliferation. Inhibits beta cell apoptosis. Functionally, stimulates intestinal growth and up-regulates villus height in the small intestine, concomitant with increased crypt cell proliferation and decreased enterocyte apoptosis. The gastrointestinal tract, from the stomach to the colon is the principal target for GLP-2 action. Plays a key role in nutrient homeostasis, enhancing nutrient assimilation through enhanced gastrointestinal function, as well as increasing nutrient disposal. Stimulates intestinal glucose transport and decreases mucosal permeability. Significantly reduces food intake. Inhibits gastric emptying in humans. Suppression of gastric emptying may lead to increased gastric distension, which may contribute to satiety by causing a sensation of fullness. Its function is as follows. May modulate gastric acid secretion and the gastro-pyloro-duodenal activity. May play an important role in intestinal mucosal growth in the early period of life. This chain is Pro-glucagon (Gcg), found in Mus musculus (Mouse).